The sequence spans 118 residues: Ribulose bisphosphate carboxylase small subunit (118 aa).

It belongs to the RuBisCO small chain family. In terms of assembly, heterohexadecamer of 8 large and 8 small subunits.

The protein resides in the carboxysome. In terms of biological role, ruBisCO catalyzes two reactions: the carboxylation of D-ribulose 1,5-bisphosphate, the primary event in carbon dioxide fixation, as well as the oxidative fragmentation of the pentose substrate in the photorespiration process. Both reactions occur simultaneously and in competition at the same active site. Although the small subunit is not catalytic it is essential for maximal activity. The chain is Ribulose bisphosphate carboxylase small subunit from Thermosynechococcus vestitus (strain NIES-2133 / IAM M-273 / BP-1).